We begin with the raw amino-acid sequence, 134 residues long: MLSPKRTRFRKQHRGRMKGISYRGNRISFGKYALQALEPAWITSRQIEAGRRAMTRNARRGGKIWVRIFPDKPVTLRPAETRMGSGKGSPEYWVAVVKPGRILYEMGGVTENIARRAISLAASKMPIRTQFIIS.

This sequence belongs to the universal ribosomal protein uL16 family. As to quaternary structure, part of the 50S ribosomal subunit.

The protein localises to the plastid. Its subcellular location is the chloroplast. The protein is Large ribosomal subunit protein uL16c of Solanum lycopersicum (Tomato).